A 566-amino-acid chain; its full sequence is Glutamate--tRNA ligase (566 aa).

Residues 104–114 (PNPDGPLHLGN) carry the 'HIGH' region motif.

The protein belongs to the class-I aminoacyl-tRNA synthetase family. Glutamate--tRNA ligase type 2 subfamily.

The protein localises to the cytoplasm. It carries out the reaction tRNA(Glu) + L-glutamate + ATP = L-glutamyl-tRNA(Glu) + AMP + diphosphate. Its function is as follows. Catalyzes the attachment of glutamate to tRNA(Glu) in a two-step reaction: glutamate is first activated by ATP to form Glu-AMP and then transferred to the acceptor end of tRNA(Glu). The sequence is that of Glutamate--tRNA ligase from Metallosphaera sedula (strain ATCC 51363 / DSM 5348 / JCM 9185 / NBRC 15509 / TH2).